A 1415-amino-acid chain; its full sequence is DNA-directed RNA polymerase subunit beta'' (1415 aa).

Residues cysteine 217, cysteine 291, cysteine 298, and cysteine 301 each contribute to the Zn(2+) site.

Belongs to the RNA polymerase beta' chain family. RpoC2 subfamily. As to quaternary structure, in plastids the minimal PEP RNA polymerase catalytic core is composed of four subunits: alpha, beta, beta', and beta''. When a (nuclear-encoded) sigma factor is associated with the core the holoenzyme is formed, which can initiate transcription. Zn(2+) serves as cofactor.

Its subcellular location is the plastid. The protein localises to the chloroplast. The enzyme catalyses RNA(n) + a ribonucleoside 5'-triphosphate = RNA(n+1) + diphosphate. In terms of biological role, DNA-dependent RNA polymerase catalyzes the transcription of DNA into RNA using the four ribonucleoside triphosphates as substrates. The polypeptide is DNA-directed RNA polymerase subunit beta'' (Phaeodactylum tricornutum (strain CCAP 1055/1)).